The chain runs to 575 residues: Putative diflavin flavoprotein A 4 (575 aa).

The zinc metallo-hydrolase stretch occupies residues 41-234 (QRGTTANSYL…LGARSYAPGH (194 aa)). Residues 263–405 (VALLYTSAYG…AGATFAQTLK (143 aa)) enclose the Flavodoxin-like domain. Residues 429-575 (VGRIIGSLCV…AVEHRKSGSH (147 aa)) form a flavodoxin-reductase-like region.

In the N-terminal section; belongs to the zinc metallo-hydrolase group 3 family. It in the C-terminal section; belongs to the flavodoxin reductase family. It depends on Fe cation as a cofactor.

In terms of biological role, mediates electron transfer from NADH to oxygen, reducing it to water. This modular protein has 3 redox cofactors, in other organisms the same activity requires 2 or 3 proteins. The sequence is that of Putative diflavin flavoprotein A 4 (dfa4) from Nostoc sp. (strain PCC 7120 / SAG 25.82 / UTEX 2576).